Reading from the N-terminus, the 397-residue chain is Transaldolase (397 aa).

Residue K136 is the Schiff-base intermediate with substrate of the active site.

This sequence belongs to the transaldolase family. Type 1 subfamily. Homodimer.

Its subcellular location is the cytoplasm. It catalyses the reaction D-sedoheptulose 7-phosphate + D-glyceraldehyde 3-phosphate = D-erythrose 4-phosphate + beta-D-fructose 6-phosphate. The protein operates within carbohydrate degradation; pentose phosphate pathway; D-glyceraldehyde 3-phosphate and beta-D-fructose 6-phosphate from D-ribose 5-phosphate and D-xylulose 5-phosphate (non-oxidative stage): step 2/3. In terms of biological role, transaldolase is important for the balance of metabolites in the pentose-phosphate pathway. In Synechococcus sp. (strain ATCC 27144 / PCC 6301 / SAUG 1402/1) (Anacystis nidulans), this protein is Transaldolase.